An 85-amino-acid polypeptide reads, in one-letter code: MAHKKGQGSTQNNRDSIGRRLGVKKFGGEFVRAGNIIIRQRGTATHAGSNVGLGKDHTIFALIDGFVKFERKDKNRKKVSVYPAA.

The protein belongs to the bacterial ribosomal protein bL27 family.

This chain is Large ribosomal subunit protein bL27, found in Campylobacter curvus (strain 525.92).